Reading from the N-terminus, the 234-residue chain is Opacity protein V28 (234 aa).

A signal peptide is located at residue A1.

This sequence belongs to the opacity porin family.

Its subcellular location is the cell outer membrane. In terms of biological role, implicated in a number of adherence functions. OPA proteins are implicated in pathogenesis and are subject to phase variation. The chain is Opacity protein V28 from Neisseria gonorrhoeae.